Here is a 475-residue protein sequence, read N- to C-terminus: Alpha,alpha-trehalose-phosphate synthase [UDP-forming] (475 aa).

D-glucose 6-phosphate is bound by residues Tyr-93 and Asp-147. UDP is bound by residues Arg-285 and Lys-290. UDP-alpha-D-glucose contacts are provided by Arg-285 and Lys-290. Arg-323 contributes to the D-glucose 6-phosphate binding site. Residue 384-392 (DGMNLVSYE) participates in UDP-alpha-D-glucose binding. UDP is bound at residue 388–392 (LVSYE).

Belongs to the glycosyltransferase 20 family.

It carries out the reaction D-glucose 6-phosphate + UDP-alpha-D-glucose = alpha,alpha-trehalose 6-phosphate + UDP + H(+). It participates in carbohydrate biosynthesis. Synthase catalytic subunit of the trehalose synthase complex that catalyzes the production of trehalose from glucose-6-phosphate and UDP-alpha-D-glucose in a two step process. This Pichia angusta (Yeast) protein is Alpha,alpha-trehalose-phosphate synthase [UDP-forming].